A 414-amino-acid polypeptide reads, in one-letter code: Ornithine aminotransferase (414 aa).

An intrachain disulfide couples Cys154 to Cys163. Lys262 carries the N6-(pyridoxal phosphate)lysine modification.

Belongs to the class-III pyridoxal-phosphate-dependent aminotransferase family. In terms of assembly, homodimer. It depends on pyridoxal 5'-phosphate as a cofactor. In terms of processing, the disulfide bond between Cys-154 and Cys-163 is reduced by TRX1 which increases OAT catalytic activity.

Its subcellular location is the cytoplasm. The catalysed reaction is a 2-oxocarboxylate + L-ornithine = L-glutamate 5-semialdehyde + an L-alpha-amino acid. It carries out the reaction L-ornithine + 2-oxoglutarate = L-glutamate 5-semialdehyde + L-glutamate. The protein operates within amino-acid biosynthesis; L-proline biosynthesis; L-glutamate 5-semialdehyde from L-ornithine: step 1/1. Unlike for mammalian OATs, activity is increased by TRX1-mediated reduction of the disulfide bond between Cys-154 and Cys-163. Binding to TRX1 may also induce conformational changes that facilitate substrate binding. Functionally, the enzyme has a very narrow substrate specificity and can only catalyze the transamination of alpha-ketoglutarate with ornithine or N-acetylornithine and, to a lesser extent, of glutamate-5-semialdehyde with glutamate and alanine. This Plasmodium falciparum (isolate 3D7) protein is Ornithine aminotransferase.